Consider the following 77-residue polypeptide: Neurotoxin LmNaTx21.1 (77 aa).

The N-terminal stretch at 1–7 (LILVACL) is a signal peptide. An LCN-type CS-alpha/beta domain is found at 16-76 (KDGYPVDWNN…VEIKGYGRCR (61 aa)). 4 disulfides stabilise this stretch: C26–C75, C30–C51, C37–C58, and C41–C60.

It belongs to the long (4 C-C) scorpion toxin superfamily. Sodium channel inhibitor family. Alpha subfamily. In terms of tissue distribution, expressed by the venom gland.

Its subcellular location is the secreted. Its function is as follows. Binds voltage-independently at site-3 of voltage-gated sodium channels (Nav) and inhibits the inactivation of the activated channels, thereby blocking neuronal transmission. This is Neurotoxin LmNaTx21.1 from Lychas mucronatus (Chinese swimming scorpion).